Consider the following 245-residue polypeptide: DNA polymerase sliding clamp 1 (245 aa).

Belongs to the PCNA family. Homotrimer. The subunits circularize to form a toroid; DNA passes through its center. Replication factor C (RFC) is required to load the toroid on the DNA.

In terms of biological role, sliding clamp subunit that acts as a moving platform for DNA processing. Responsible for tethering the catalytic subunit of DNA polymerase and other proteins to DNA during high-speed replication. The protein is DNA polymerase sliding clamp 1 of Sulfurisphaera ohwakuensis.